A 473-amino-acid polypeptide reads, in one-letter code: Ribulose bisphosphate carboxylase large chain (473 aa).

Residues asparagine 116 and threonine 166 each coordinate substrate. The active-site Proton acceptor is the lysine 168. Residue lysine 170 participates in substrate binding. The Mg(2+) site is built by lysine 194, aspartate 196, and glutamate 197. At lysine 194 the chain carries N6-carboxylysine. The active-site Proton acceptor is the histidine 287. Substrate is bound by residues arginine 288, histidine 320, and serine 372.

Belongs to the RuBisCO large chain family. Type I subfamily. In terms of assembly, heterohexadecamer of 8 large chains and 8 small chains. Mg(2+) serves as cofactor.

It catalyses the reaction 2 (2R)-3-phosphoglycerate + 2 H(+) = D-ribulose 1,5-bisphosphate + CO2 + H2O. It carries out the reaction D-ribulose 1,5-bisphosphate + O2 = 2-phosphoglycolate + (2R)-3-phosphoglycerate + 2 H(+). RuBisCO catalyzes two reactions: the carboxylation of D-ribulose 1,5-bisphosphate, the primary event in carbon dioxide fixation, as well as the oxidative fragmentation of the pentose substrate. Both reactions occur simultaneously and in competition at the same active site. The polypeptide is Ribulose bisphosphate carboxylase large chain (Thiomonas intermedia (strain K12) (Thiobacillus intermedius)).